We begin with the raw amino-acid sequence, 630 residues long: Chaperone protein DnaK (630 aa).

The residue at position 198 (Thr198) is a Phosphothreonine; by autocatalysis. The interval 604–630 (AAAAPGEEAPKDDDVVDAEFSEVDDKK) is disordered. Acidic residues predominate over residues 617 to 630 (DVVDAEFSEVDDKK).

The protein belongs to the heat shock protein 70 family.

Functionally, acts as a chaperone. This chain is Chaperone protein DnaK, found in Rhizorhabdus wittichii (strain DSM 6014 / CCUG 31198 / JCM 15750 / NBRC 105917 / EY 4224 / RW1) (Sphingomonas wittichii).